A 248-amino-acid polypeptide reads, in one-letter code: Triosephosphate isomerase (248 aa).

9-11 (NWK) is a binding site for substrate. H94 (electrophile) is an active-site residue. E166 serves as the catalytic Proton acceptor. Substrate-binding positions include G172, S211, and 232–233 (GG).

This sequence belongs to the triosephosphate isomerase family. In terms of assembly, homodimer.

It localises to the cytoplasm. The enzyme catalyses D-glyceraldehyde 3-phosphate = dihydroxyacetone phosphate. It functions in the pathway carbohydrate biosynthesis; gluconeogenesis. The protein operates within carbohydrate degradation; glycolysis; D-glyceraldehyde 3-phosphate from glycerone phosphate: step 1/1. Its function is as follows. Involved in the gluconeogenesis. Catalyzes stereospecifically the conversion of dihydroxyacetone phosphate (DHAP) to D-glyceraldehyde-3-phosphate (G3P). The chain is Triosephosphate isomerase from Ruthia magnifica subsp. Calyptogena magnifica.